The primary structure comprises 512 residues: Maturase K (512 aa).

The protein belongs to the intron maturase 2 family. MatK subfamily.

It is found in the plastid. The protein resides in the chloroplast. Its function is as follows. Usually encoded in the trnK tRNA gene intron. Probably assists in splicing its own and other chloroplast group II introns. This is Maturase K from Lilium henryi (Henry's lily).